We begin with the raw amino-acid sequence, 308 residues long: Ferredoxin--NADP reductase (308 aa).

Positions 26, 34, 39, 77, 106, 266, and 306 each coordinate FAD.

This sequence belongs to the ferredoxin--NADP reductase type 2 family. As to quaternary structure, homodimer. FAD serves as cofactor.

It carries out the reaction 2 reduced [2Fe-2S]-[ferredoxin] + NADP(+) + H(+) = 2 oxidized [2Fe-2S]-[ferredoxin] + NADPH. This Lactobacillus delbrueckii subsp. bulgaricus (strain ATCC 11842 / DSM 20081 / BCRC 10696 / JCM 1002 / NBRC 13953 / NCIMB 11778 / NCTC 12712 / WDCM 00102 / Lb 14) protein is Ferredoxin--NADP reductase.